The primary structure comprises 1088 residues: Protein unc-13 homolog D (1088 aa).

The interval 26–46 (VRDLQDPPPQATPEVQVQSHH) is disordered. The C2 1 domain occupies 92–239 (QPEEHQQMLQ…FKEARKDKGQ (148 aa)). Ca(2+) contacts are provided by D127 and D133. S150 is modified (phosphoserine). The Ca(2+) site is built by D206 and D208. An interaction with RAB27A region spans residues 240–543 (DDFLGNVMLR…AKRVQDHTAA (304 aa)). An MHD1 domain is found at 557–675 (FQLYVSLREF…RLALVYCSLI (119 aa)). The region spanning 786-893 (EDAILPLMKF…ASSRELIQKY (108 aa)) is the MHD2 domain. Residues 908-1033 (RLGAVTVKAS…PGLTGCVEPG (126 aa)) enclose the C2 2 domain. Ca(2+)-binding residues include L938, D939, D945, D1003, D1005, and D1011.

The protein belongs to the unc-13 family. In terms of assembly, interacts with RAB27A and DOC2A. Interacts with RhoG; the interaction increases RhoG affinity to the membrane lipids, targets Unc13d to membrane lipids and facilitates cytotoxic granule (CG) docking to the plasma membrane. Ca(2+) serves as cofactor. Expressed in lung bronchial epithelium goblet/mucous cells. Also expressed in spleen and testis. Expressed at very low levels in heart muscle, kidney, liver, brain and skeletal muscle.

The protein localises to the cytoplasm. It localises to the membrane. It is found in the late endosome. The protein resides in the recycling endosome. Its subcellular location is the lysosome. In terms of biological role, plays a role in cytotoxic granule exocytosis in lymphocytes. Required for both granule maturation and granule docking and priming at the immunologic synapse. Regulates assembly of recycling and late endosomal structures, leading to the formation of an endosomal exocytic compartment that fuses with perforin-containing granules at the immunologic synapse and licences them for exocytosis. Regulates Ca(2+)-dependent secretory lysosome exocytosis in mast cells. This chain is Protein unc-13 homolog D (Unc13d), found in Rattus norvegicus (Rat).